The chain runs to 513 residues: Protein phosphatase 1H (513 aa).

Residue Ser7 is modified to Phosphoserine. A PPM-type phosphatase domain is found at 77–506 (ATGYAEVINA…DDISVYVIPL (430 aa)). The interval 109–133 (TITSTPNRNSKRRSSLPNGEGLQLK) is disordered. Thr113 is subject to Phosphothreonine. Phosphoserine is present on residues Ser123 and Ser210. Arg212 carries the omega-N-methylarginine modification. The residue at position 220 (Ser220) is a Phosphoserine. Phosphothreonine is present on Thr223. A Phosphoserine modification is found at Ser421.

The protein belongs to the PP2C family.

It localises to the nucleus. Its subcellular location is the cytoplasm. The enzyme catalyses O-phospho-L-seryl-[protein] + H2O = L-seryl-[protein] + phosphate. The catalysed reaction is O-phospho-L-threonyl-[protein] + H2O = L-threonyl-[protein] + phosphate. Its function is as follows. Dephosphorylates CDKN1B at 'Thr-187', thus removing a signal for proteasomal degradation. The polypeptide is Protein phosphatase 1H (Ppm1h) (Mus musculus (Mouse)).